Reading from the N-terminus, the 221-residue chain is PKHD-type hydroxylase P9515_13321 (221 aa).

Residues 80–174 (TIHGIMFTKS…RLVCVGWIES (95 aa)) form the Fe2OG dioxygenase domain. Fe cation-binding residues include H98, D100, and H155. R165 contributes to the 2-oxoglutarate binding site.

The cofactor is Fe(2+). L-ascorbate is required as a cofactor.

The chain is PKHD-type hydroxylase P9515_13321 from Prochlorococcus marinus (strain MIT 9515).